The sequence spans 414 residues: Snake venom metalloproteinase atrolysin-D (414 aa).

An N-terminal signal peptide occupies residues 1–20 (MIEVLLVTICLAVFPYQGSS). Residues 21–190 (IILESGNVND…KASDLNLNPD (170 aa)) constitute a propeptide that is removed on maturation. Glutamine 191 is subject to Pyrrolidone carboxylic acid. The 197-residue stretch at 197–393 (RYIELVVVAD…YKPQCILNKP (197 aa)) folds into the Peptidase M12B domain. Positions 200 and 284 each coordinate Ca(2+). 2 disulfides stabilise this stretch: cysteine 308–cysteine 388 and cysteine 348–cysteine 355. Histidine 333 lines the Zn(2+) pocket. Glutamate 334 is an active-site residue. Histidine 337 and histidine 343 together coordinate Zn(2+). Residues cysteine 388 and asparagine 391 each coordinate Ca(2+). A propeptide spanning residues 394-414 (LRIDPVSTPVSGNELLEAGEE) is cleaved from the precursor.

This sequence belongs to the venom metalloproteinase (M12B) family. P-I subfamily. As to quaternary structure, monomer. Zn(2+) is required as a cofactor. In terms of processing, the N-terminus is blocked. Expressed by the venom gland.

The protein localises to the secreted. It catalyses the reaction Cleavage of 5-His-|-Leu-6, 10-His-|-Leu-11, 14-Ala-|-Leu-15, 16-Tyr-|-Leu-17 and 23-Gly-|-Phe-24 of insulin B chain. With small molecule substrates prefers hydrophobic residue at P2' and small residue such as Ala, Gly at P1.. In terms of biological role, snake venom zinc metalloproteinase that causes hemorrhage by provoking the degradation of the sub-endothelial matrix proteins (fibronectin, laminin, type IV collagen, nidogen, and gelatins). This Crotalus atrox (Western diamondback rattlesnake) protein is Snake venom metalloproteinase atrolysin-D.